The chain runs to 283 residues: Large ribosomal subunit protein uL2 (283 aa).

Disordered stretches follow at residues Met-1–Lys-59 and Arg-222–Gln-283.

Belongs to the universal ribosomal protein uL2 family. Part of the 50S ribosomal subunit. Forms a bridge to the 30S subunit in the 70S ribosome.

In terms of biological role, one of the primary rRNA binding proteins. Required for association of the 30S and 50S subunits to form the 70S ribosome, for tRNA binding and peptide bond formation. It has been suggested to have peptidyltransferase activity; this is somewhat controversial. Makes several contacts with the 16S rRNA in the 70S ribosome. This chain is Large ribosomal subunit protein uL2, found in Salinibacter ruber (strain DSM 13855 / M31).